We begin with the raw amino-acid sequence, 251 residues long: Hydroxyacylglutathione hydrolase (251 aa).

Residues histidine 53, histidine 55, aspartate 57, histidine 58, histidine 110, aspartate 127, and histidine 165 each contribute to the Zn(2+) site.

This sequence belongs to the metallo-beta-lactamase superfamily. Glyoxalase II family. Monomer. It depends on Zn(2+) as a cofactor.

The enzyme catalyses an S-(2-hydroxyacyl)glutathione + H2O = a 2-hydroxy carboxylate + glutathione + H(+). It functions in the pathway secondary metabolite metabolism; methylglyoxal degradation; (R)-lactate from methylglyoxal: step 2/2. Thiolesterase that catalyzes the hydrolysis of S-D-lactoyl-glutathione to form glutathione and D-lactic acid. This Pectobacterium atrosepticum (strain SCRI 1043 / ATCC BAA-672) (Erwinia carotovora subsp. atroseptica) protein is Hydroxyacylglutathione hydrolase.